The sequence spans 416 residues: Probable protein phosphatase 2C 75 (416 aa).

Disordered stretches follow at residues 1 to 20 (MTEI…SPTK) and 32 to 51 (RRQA…DRTD). Positions 108–411 (LYGIVSVMGR…DNISVVVIDL (304 aa)) constitute a PPM-type phosphatase domain. Residues Asp149, Gly150, Asp337, and Asp402 each contribute to the Mn(2+) site.

The protein belongs to the PP2C family. The cofactor is Mg(2+). It depends on Mn(2+) as a cofactor.

It catalyses the reaction O-phospho-L-seryl-[protein] + H2O = L-seryl-[protein] + phosphate. It carries out the reaction O-phospho-L-threonyl-[protein] + H2O = L-threonyl-[protein] + phosphate. In terms of biological role, negative regulator of abscisic acid (ABA) responses during seed germination. The polypeptide is Probable protein phosphatase 2C 75 (AHG1) (Arabidopsis thaliana (Mouse-ear cress)).